We begin with the raw amino-acid sequence, 216 residues long: Transmembrane emp24 domain-containing protein eca (216 aa).

Positions 1–20 (MRDQILSLALLLCVLHSACG) are cleaved as a signal peptide. The Lumenal portion of the chain corresponds to 21 to 182 (LYFHISETER…FRHTSESTNS (162 aa)). One can recognise a GOLD domain in the interval 30 to 126 (RKCFIEEVPD…QLRVHLDIQV (97 aa)). Positions 134–164 (ANVAQKEKLTELQLRIRQLLDQVEQITKEQN) form a coiled coil. Residues 183-203 (RVLWWSLAQTVVLVCMGFWQM) form a helical membrane-spanning segment. The Cytoplasmic portion of the chain corresponds to 204–216 (RHLKSFFEAKKLV). Residues 213–216 (KKLV) carry the Prevents secretion from ER motif.

Belongs to the EMP24/GP25L family.

Its subcellular location is the endoplasmic reticulum membrane. In terms of biological role, eca and bai are essential, though not redundant, for dorsoventral patterning of the embryo. Specifically required during early embryogenesis for the activity of maternal tkv, while the zygotic tkv is not affected. Involved in Golgi organization. In Drosophila ananassae (Fruit fly), this protein is Transmembrane emp24 domain-containing protein eca.